A 99-amino-acid chain; its full sequence is Small ribosomal subunit protein bS6 (99 aa).

It belongs to the bacterial ribosomal protein bS6 family.

In terms of biological role, binds together with bS18 to 16S ribosomal RNA. The sequence is that of Small ribosomal subunit protein bS6 from Lactiplantibacillus plantarum (strain ATCC BAA-793 / NCIMB 8826 / WCFS1) (Lactobacillus plantarum).